The following is a 53-amino-acid chain: Mannose/glucose-specific lectin alpha chain (53 aa).

It belongs to the leguminous lectin family. In terms of assembly, heterodimer of an alpha and a beta chain.

In terms of biological role, this lectin specifically binds mannose and glucose. This chain is Mannose/glucose-specific lectin alpha chain, found in Vicia cracca (Bird vetch).